We begin with the raw amino-acid sequence, 196 residues long: SAGA-associated factor 11 homolog (196 aa).

A disordered region spans residues 1-22; the sequence is MSAANMPTTTGAQGSGNQVPTT. The SGF11-type zinc finger occupies 106–127; it reads CTCPNCDRLVAAARFAPHLEKC. The segment at 144-196 is disordered; it reads TKEGASSAHLHSAGNAGGTDDEDDVDWSSDKRRKKSNQNSRNNGSKKNNGKTF. Residue S172 is modified to Phosphoserine. The span at 180-196 shows a compositional bias: low complexity; it reads NQNSRNNGSKKNNGKTF.

The protein belongs to the SGF11 family. In terms of assembly, component of some SAGA transcription coactivator-HAT complexes, at least composed of Ada2b, not/nonstop, Pcaf/Gcn5, Sgf11 and Spt3. Within the SAGA complex, Sgf11, e(y)2, and not/nonstop form an additional subcomplex of SAGA called the DUB module (deubiquitination module). Interacts directly with not/nonstop. Interacts with the AMEX complex component xmas-2. Interacts with Cbp80; important for promoter recruitment of Sgf11 that is not associated with the DUB module.

It is found in the nucleus. Its subcellular location is the nucleoplasm. The protein localises to the cytoplasm. In terms of biological role, component of the transcription regulatory histone acetylation (HAT) complex SAGA, a multiprotein complex that activates transcription by remodeling chromatin and mediating histone acetylation and deubiquitination. Within the SAGA complex, participates in a subcomplex that specifically deubiquitinates histone H2B. The SAGA complex is recruited to specific gene promoters by activators, where it is required for transcription. Required for nuclear receptor-mediated transactivation. Binds independently on SAGA to promoters in an RNA-dependent manner. Binds to mRNA and is essential for total mRNA export from the nucleus. Required to counteract heterochromatin silencing. Controls the development of neuronal connectivity in visual system by being required for accurate axon targeting in the optic lobe. Required for expression of ecdysone-induced genes such as br/broad. This chain is SAGA-associated factor 11 homolog, found in Drosophila yakuba (Fruit fly).